Consider the following 153-residue polypeptide: MIALIQRVTQASVRVDGATVGAIGRGTLALVAIERGDGATQVSRMAERLLGYRMFPDSENRMNLSLAETGGGLLLVSQFTLAADTAKGMRPSFTPAADPETGRRLFDALVDATQRRHSPVATGRFGADMQVFLVNDGPVTFLLRCPPDRPPGG.

Positions 137-138 match the Gly-cisPro motif, important for rejection of L-amino acids motif; the sequence is GP.

The protein belongs to the DTD family. Homodimer.

Its subcellular location is the cytoplasm. It carries out the reaction glycyl-tRNA(Ala) + H2O = tRNA(Ala) + glycine + H(+). The catalysed reaction is a D-aminoacyl-tRNA + H2O = a tRNA + a D-alpha-amino acid + H(+). Its function is as follows. An aminoacyl-tRNA editing enzyme that deacylates mischarged D-aminoacyl-tRNAs. Also deacylates mischarged glycyl-tRNA(Ala), protecting cells against glycine mischarging by AlaRS. Acts via tRNA-based rather than protein-based catalysis; rejects L-amino acids rather than detecting D-amino acids in the active site. By recycling D-aminoacyl-tRNA to D-amino acids and free tRNA molecules, this enzyme counteracts the toxicity associated with the formation of D-aminoacyl-tRNA entities in vivo and helps enforce protein L-homochirality. The chain is D-aminoacyl-tRNA deacylase from Methylococcus capsulatus (strain ATCC 33009 / NCIMB 11132 / Bath).